The sequence spans 215 residues: N-(5'-phosphoribosyl)anthranilate isomerase (215 aa).

It belongs to the TrpF family.

The enzyme catalyses N-(5-phospho-beta-D-ribosyl)anthranilate = 1-(2-carboxyphenylamino)-1-deoxy-D-ribulose 5-phosphate. It functions in the pathway amino-acid biosynthesis; L-tryptophan biosynthesis; L-tryptophan from chorismate: step 3/5. The chain is N-(5'-phosphoribosyl)anthranilate isomerase from Rippkaea orientalis (strain PCC 8801 / RF-1) (Cyanothece sp. (strain PCC 8801)).